The sequence spans 334 residues: DNA-directed RNA polymerase subunit alpha (334 aa).

Residues 1-234 (MQTKVNELLK…SQLAAFVELQ (234 aa)) form an alpha N-terminal domain (alpha-NTD) region. The segment at 248–334 (IDPILLRPVD…LKDQDKKASG (87 aa)) is alpha C-terminal domain (alpha-CTD).

Belongs to the RNA polymerase alpha chain family. Homodimer. The RNAP catalytic core consists of 2 alpha, 1 beta, 1 beta' and 1 omega subunit. When a sigma factor is associated with the core the holoenzyme is formed, which can initiate transcription.

It catalyses the reaction RNA(n) + a ribonucleoside 5'-triphosphate = RNA(n+1) + diphosphate. DNA-dependent RNA polymerase catalyzes the transcription of DNA into RNA using the four ribonucleoside triphosphates as substrates. The sequence is that of DNA-directed RNA polymerase subunit alpha from Thioalkalivibrio sulfidiphilus (strain HL-EbGR7).